Consider the following 437-residue polypeptide: UDP-N-acetylmuramate--L-alanine ligase (437 aa).

108–114 (GAHGKTS) lines the ATP pocket.

Belongs to the MurCDEF family.

It is found in the cytoplasm. It catalyses the reaction UDP-N-acetyl-alpha-D-muramate + L-alanine + ATP = UDP-N-acetyl-alpha-D-muramoyl-L-alanine + ADP + phosphate + H(+). The protein operates within cell wall biogenesis; peptidoglycan biosynthesis. Cell wall formation. This Staphylococcus aureus protein is UDP-N-acetylmuramate--L-alanine ligase.